Here is a 629-residue protein sequence, read N- to C-terminus: Forkhead box protein O (629 aa).

Thr-49 is modified (phosphothreonine; by PKB/AKT1). Ser-78 carries the post-translational modification Phosphoserine. The segment at residues 98–204 (WGNLSYADLI…ETSRYEKRRG (107 aa)) is a DNA-binding region (fork-head). 5 disordered regions span residues 185–208 (KSVR…RAKK), 220–274 (GLND…SPIR), 321–368 (QQQF…QTLQ), 394–417 (SPNS…DSLN), and 563–597 (QHLQ…NSSL). At Ser-193 the chain carries Phosphoserine; by PKB/AKT1. Polar residues-rich tracts occupy residues 224–233 (ATPSPSSSVS) and 259–268 (RASSNASSCG). Ser-262 carries the phosphoserine; by PKB/AKT1 modification. Phosphoserine occurs at positions 265, 266, and 271. Positions 332–341 (SQPPPPPYQP) are enriched in pro residues. Residues 342–356 (PQLQQQQQQQPSYSL) show a composition bias toward low complexity. Over residues 394–403 (SPNSVTTTMS) the composition is skewed to polar residues.

Interacts with melt.

It localises to the cytoplasm. The protein localises to the nucleus. Functionally, transcription factor involved in the regulation of the insulin signaling pathway. Consistently activates both the downstream target Thor\d4EBP and the feedback control target InR. Involved in negative regulation of the cell cycle, modulating cell growth and proliferation. In response to cellular stresses, such as nutrient deprivation or increased levels of reactive oxygen species, foxo is activated and inhibits growth through the action of target genes such as Thor. Foxo activated in the adult fat body can regulate lifespan in adults; an insulin peptide itself may function as one secondary messenger of insulin-regulated aging. Also regulates Lip4, homolog of human acid lipases, thereby acting as a key modulator of lipid metabolism by insulin signaling and integrates insulin responses to glucose and lipid homeostasis. This chain is Forkhead box protein O, found in Drosophila persimilis (Fruit fly).